The chain runs to 165 residues: Ubiquitin-fold modifier-conjugating enzyme 1 (165 aa).

The active-site Glycyl thioester intermediate is cysteine 116.

Belongs to the ubiquitin-conjugating enzyme family. UFC1 subfamily.

E2-like enzyme which forms an intermediate with UFM1 via a thioester linkage. The chain is Ubiquitin-fold modifier-conjugating enzyme 1 from Drosophila mojavensis (Fruit fly).